The chain runs to 242 residues: MSKSRLTVFSFVRRFLLRLMVVLAVFWGGGIALFSVAPVPFSAVMVERQVSAWLHGNFRYVAHSDWVSMDQISPWMGLAVIAAEDQKFPEHWGFDVASIEQALAHNERNENRIRGASTISQQTAKNLFLWDGRSWVRKGLEAGLTLGIETVWSKKRILTVYLNIAEFGDGVFGVEAAAQRYFHKPASKLTRSEAALLAAVLPNPLRFKVSAPSGYVRSRQAWILRQMYQLGGEPFMQQHQLD.

Residues 19-39 form a helical membrane-spanning segment; that stretch reads LMVVLAVFWGGGIALFSVAPV.

Belongs to the glycosyltransferase 51 family.

The protein localises to the cell inner membrane. The enzyme catalyses [GlcNAc-(1-&gt;4)-Mur2Ac(oyl-L-Ala-gamma-D-Glu-L-Lys-D-Ala-D-Ala)](n)-di-trans,octa-cis-undecaprenyl diphosphate + beta-D-GlcNAc-(1-&gt;4)-Mur2Ac(oyl-L-Ala-gamma-D-Glu-L-Lys-D-Ala-D-Ala)-di-trans,octa-cis-undecaprenyl diphosphate = [GlcNAc-(1-&gt;4)-Mur2Ac(oyl-L-Ala-gamma-D-Glu-L-Lys-D-Ala-D-Ala)](n+1)-di-trans,octa-cis-undecaprenyl diphosphate + di-trans,octa-cis-undecaprenyl diphosphate + H(+). Its pathway is cell wall biogenesis; peptidoglycan biosynthesis. In terms of biological role, peptidoglycan polymerase that catalyzes glycan chain elongation from lipid-linked precursors. The chain is Biosynthetic peptidoglycan transglycosylase from Escherichia coli (strain SMS-3-5 / SECEC).